Reading from the N-terminus, the 517-residue chain is GMP synthase [glutamine-hydrolyzing] (517 aa).

Positions 11–202 (KIIVLDYGSQ…AFDICKAEAN (192 aa)) constitute a Glutamine amidotransferase type-1 domain. Cys88 serves as the catalytic Nucleophile. Residues His176 and Glu178 contribute to the active site. Residues 203-392 (WSMDDFITKQ…LGMPHALVWR (190 aa)) enclose the GMPS ATP-PPase domain. ATP is bound at residue 230–236 (SGGVDSS).

As to quaternary structure, homodimer.

The enzyme catalyses XMP + L-glutamine + ATP + H2O = GMP + L-glutamate + AMP + diphosphate + 2 H(+). It functions in the pathway purine metabolism; GMP biosynthesis; GMP from XMP (L-Gln route): step 1/1. Its function is as follows. Catalyzes the synthesis of GMP from XMP. The protein is GMP synthase [glutamine-hydrolyzing] of Lacticaseibacillus casei (strain BL23) (Lactobacillus casei).